Consider the following 496-residue polypeptide: Steroid 21-hydroxylase (496 aa).

Serine 109 serves as a coordination point for heme b. A 17alpha-hydroxyprogesterone-binding site is contributed by arginine 232. Position 232 (arginine 232) interacts with progesterone. Residues histidine 364, arginine 425, and cysteine 427 each coordinate heme b.

The protein belongs to the cytochrome P450 family. Requires heme b as cofactor.

It localises to the endoplasmic reticulum membrane. The protein localises to the microsome membrane. The enzyme catalyses progesterone + reduced [NADPH--hemoprotein reductase] + O2 = 21-hydroxyprogesterone + oxidized [NADPH--hemoprotein reductase] + H2O + H(+). It carries out the reaction 17alpha-hydroxyprogesterone + reduced [NADPH--hemoprotein reductase] + O2 = 11-deoxycortisol + oxidized [NADPH--hemoprotein reductase] + H2O + H(+). Its function is as follows. A cytochrome P450 monooxygenase that plays a major role in adrenal steroidogenesis. Catalyzes the hydroxylation at C-21 of progesterone and 17alpha-hydroxyprogesterone to respectively form 11-deoxycorticosterone and 11-deoxycortisol, intermediate metabolites in the biosynthetic pathway of mineralocorticoids and glucocorticoids. Mechanistically, uses molecular oxygen inserting one oxygen atom into a substrate, and reducing the second into a water molecule, with two electrons provided by NADPH via cytochrome P450 reductase (CPR; NADPH-ferrihemoprotein reductase). This chain is Steroid 21-hydroxylase (CYP21), found in Bos taurus (Bovine).